The sequence spans 385 residues: Cytochrome b (385 aa).

Transmembrane regions (helical) follow at residues 32 to 52 (FGSL…TLAM), 76 to 98 (WLIR…LHIG), 113 to 133 (AWIL…LGYV), and 179 to 199 (FFAL…MHLI). Residues histidine 82 and histidine 96 each coordinate heme b. Histidine 183 and histidine 197 together coordinate heme b. Histidine 202 contacts a ubiquinone. The next 4 helical transmembrane spans lie at 226-246 (YLFK…IFVF), 290-310 (LLGV…PKTD), 322-342 (LSKI…QLGA), and 349-369 (FIEF…IIMP).

It belongs to the cytochrome b family. Fungal cytochrome b-c1 complex contains 10 subunits; 3 respiratory subunits, 2 core proteins and 5 low-molecular weight proteins. Cytochrome b-c1 complex is a homodimer. Heme b is required as a cofactor.

It localises to the mitochondrion inner membrane. In terms of biological role, component of the ubiquinol-cytochrome c reductase complex (complex III or cytochrome b-c1 complex) that is part of the mitochondrial respiratory chain. The b-c1 complex mediates electron transfer from ubiquinol to cytochrome c. Contributes to the generation of a proton gradient across the mitochondrial membrane that is then used for ATP synthesis. This Akanthomyces muscarius (Entomopathogenic fungus) protein is Cytochrome b (cob).